The sequence spans 473 residues: Levansucrase (473 aa).

An N-terminal signal peptide occupies residues M1 to A29. Residues W85, D86, and S164 each coordinate sucrose. The active-site Nucleophile is D86. Residue D241 coordinates Ca(2+). 2 residues coordinate sucrose: R246 and D247. Ca(2+) contacts are provided by Q272, L308, N310, and D339. E340 is a sucrose binding site. The active-site Proton donor/acceptor is E342. Sucrose is bound at residue R360.

This sequence belongs to the glycosyl hydrolase 68 family. In terms of assembly, monomer.

The protein resides in the secreted. It catalyses the reaction [6)-beta-D-fructofuranosyl-(2-&gt;](n) alpha-D-glucopyranoside + sucrose = [6)-beta-D-fructofuranosyl-(2-&gt;](n+1) alpha-D-glucopyranoside + D-glucose. Ca(2+) may play an important structural role and promote stability of levansucrase. The enzyme concentration is a factor defining the molecular weight (MW) levan distribution. A bimodal distribution is reported at the usual enzyme concentrations. At low concentrations, the enzyme synthesizes high MW levan, and at high concentrations, it synthesizes low MW levan. Functionally, catalyzes the synthesis of levan, a fructose polymer, by transferring the fructosyl moiety from sucrose to a growing acceptor molecule. Also displays sucrose hydrolase activity. At low sucrose concentrations, functions as an hydrolase with water as acceptor, whereas at higher substrate concentrations it adds fructosyl units to a growing levan chain. This chain is Levansucrase, found in Bacillus subtilis (strain 168).